A 352-amino-acid polypeptide reads, in one-letter code: Protein RecA (352 aa).

67–74 serves as a coordination point for ATP; sequence GPESSGKT.

It belongs to the RecA family.

It is found in the cytoplasm. In terms of biological role, can catalyze the hydrolysis of ATP in the presence of single-stranded DNA, the ATP-dependent uptake of single-stranded DNA by duplex DNA, and the ATP-dependent hybridization of homologous single-stranded DNAs. It interacts with LexA causing its activation and leading to its autocatalytic cleavage. The sequence is that of Protein RecA from Chlamydia trachomatis serovar A (strain ATCC VR-571B / DSM 19440 / HAR-13).